A 241-amino-acid chain; its full sequence is ATP synthase subunit a (241 aa).

5 helical membrane passes run 21–41 (LASI…AIAC), 84–104 (VTLI…AIVI), 116–136 (DATV…YYGI), 183–203 (ILIG…WIIG), and 207–227 (LIAW…IFIM).

The protein belongs to the ATPase A chain family. F-type ATPases have 2 components, CF(1) - the catalytic core - and CF(0) - the membrane proton channel. CF(1) has five subunits: alpha(3), beta(3), gamma(1), delta(1), epsilon(1). CF(0) has three main subunits: a(1), b(2) and c(9-12). The alpha and beta chains form an alternating ring which encloses part of the gamma chain. CF(1) is attached to CF(0) by a central stalk formed by the gamma and epsilon chains, while a peripheral stalk is formed by the delta and b chains.

The protein localises to the cell membrane. Its function is as follows. Key component of the proton channel; it plays a direct role in the translocation of protons across the membrane. The protein is ATP synthase subunit a of Staphylococcus carnosus (strain TM300).